The following is a 322-amino-acid chain: MNSIHGHYHIQLSNYSAGENLQSATLTEGVIGAHRVKVETALSHSNLQKKLSATIKHNQSGRSMLDRKLTSDGKANQRSSFTFSMIMYRMIHFVLSTRVPAVRESVANYGGNINFKFAQTKGAFLHKIIKHSDTASGVCEALCAHWIRSHAQGQSLFDQLYVGGRKGKFQIDTLYSIKQLQIDGCKADVDQDEVTLDWFKKNGISERMIERHCLLRPVDVTGTTESEGLDQLLNAILDTHGIGYGYKKIHLSGQMSAHAIAAYVNEKSGVTFFDPNFGEFHFSDKEKFRKWFTNSFWDNSMYHYPLGVGQRFRVLTFDSKEV.

Catalysis depends on residues C139, H258, and D274.

It belongs to the peptidase C58 family. Interacts with human ARHA.

It is found in the secreted. Its function is as follows. Cysteine protease, which is translocated into infected cells and plays a central role in pathogenesis by cleaving the C-terminus end of the human small GTPase RhoA/ARHA, a regulator of cytoskeleton. Once cleaved, ARHA loses its lipid modification, and is released from the cell membrane, leading to the subsequent disruption of actin cytoskeleton of the host cell. This Yersinia pseudotuberculosis serotype I (strain IP32953) protein is Cysteine protease YopT (yopT).